The following is a 433-amino-acid chain: Gamma-glutamyl phosphate reductase 1 (433 aa).

Belongs to the gamma-glutamyl phosphate reductase family.

It is found in the cytoplasm. The enzyme catalyses L-glutamate 5-semialdehyde + phosphate + NADP(+) = L-glutamyl 5-phosphate + NADPH + H(+). It participates in amino-acid biosynthesis; L-proline biosynthesis; L-glutamate 5-semialdehyde from L-glutamate: step 2/2. In terms of biological role, catalyzes the NADPH-dependent reduction of L-glutamate 5-phosphate into L-glutamate 5-semialdehyde and phosphate. The product spontaneously undergoes cyclization to form 1-pyrroline-5-carboxylate. This chain is Gamma-glutamyl phosphate reductase 1, found in Synechocystis sp. (strain ATCC 27184 / PCC 6803 / Kazusa).